The sequence spans 332 residues: Glycerol-3-phosphate dehydrogenase [NAD(P)+] (332 aa).

Residues tryptophan 13, arginine 33, and lysine 107 each contribute to the NADPH site. Sn-glycerol 3-phosphate is bound by residues lysine 107, glycine 136, and serine 138. Alanine 140 is an NADPH binding site. Sn-glycerol 3-phosphate is bound by residues lysine 191, aspartate 244, serine 254, arginine 255, and asparagine 256. Lysine 191 functions as the Proton acceptor in the catalytic mechanism. Position 255 (arginine 255) interacts with NADPH. Glutamate 280 is a binding site for NADPH.

Belongs to the NAD-dependent glycerol-3-phosphate dehydrogenase family.

The protein resides in the cytoplasm. It catalyses the reaction sn-glycerol 3-phosphate + NAD(+) = dihydroxyacetone phosphate + NADH + H(+). The catalysed reaction is sn-glycerol 3-phosphate + NADP(+) = dihydroxyacetone phosphate + NADPH + H(+). Its pathway is membrane lipid metabolism; glycerophospholipid metabolism. Functionally, catalyzes the reduction of the glycolytic intermediate dihydroxyacetone phosphate (DHAP) to sn-glycerol 3-phosphate (G3P), the key precursor for phospholipid synthesis. This is Glycerol-3-phosphate dehydrogenase [NAD(P)+] from Alkalilimnicola ehrlichii (strain ATCC BAA-1101 / DSM 17681 / MLHE-1).